Here is a 77-residue protein sequence, read N- to C-terminus: MSDIADRVKKIVVEHLGVEEDKVVESASFIDDLGADSLDTVELVMAFEEEFGIEIPDDAAETIQTFGDAVKFISDAS.

In terms of domain architecture, Carrier spans 2–77; that stretch reads SDIADRVKKI…DAVKFISDAS (76 aa). Serine 37 bears the O-(pantetheine 4'-phosphoryl)serine mark.

Belongs to the acyl carrier protein (ACP) family. 4'-phosphopantetheine is transferred from CoA to a specific serine of apo-ACP by AcpS. This modification is essential for activity because fatty acids are bound in thioester linkage to the sulfhydryl of the prosthetic group.

Its subcellular location is the cytoplasm. Its pathway is lipid metabolism; fatty acid biosynthesis. In terms of biological role, carrier of the growing fatty acid chain in fatty acid biosynthesis. The polypeptide is Acyl carrier protein (Roseobacter denitrificans (strain ATCC 33942 / OCh 114) (Erythrobacter sp. (strain OCh 114))).